Here is a 692-residue protein sequence, read N- to C-terminus: Elongation factor G (692 aa).

In terms of domain architecture, tr-type G spans 8–282 (AKTRNIGIMA…AVIDYLPSPL (275 aa)). GTP is bound by residues 17–24 (AHVDAGKT), 81–85 (DTPGH), and 135–138 (NKMD).

Belongs to the TRAFAC class translation factor GTPase superfamily. Classic translation factor GTPase family. EF-G/EF-2 subfamily.

The protein localises to the cytoplasm. Its function is as follows. Catalyzes the GTP-dependent ribosomal translocation step during translation elongation. During this step, the ribosome changes from the pre-translocational (PRE) to the post-translocational (POST) state as the newly formed A-site-bound peptidyl-tRNA and P-site-bound deacylated tRNA move to the P and E sites, respectively. Catalyzes the coordinated movement of the two tRNA molecules, the mRNA and conformational changes in the ribosome. The protein is Elongation factor G of Streptococcus uberis (strain ATCC BAA-854 / 0140J).